Consider the following 511-residue polypeptide: Lysine--tRNA ligase (511 aa).

Residues 1–21 are disordered; the sequence is MHTEKDPNKNTPEQQTPISLN. The span at 9-21 shows a compositional bias: polar residues; it reads KNTPEQQTPISLN. Glu422 and Glu429 together coordinate Mg(2+).

This sequence belongs to the class-II aminoacyl-tRNA synthetase family. As to quaternary structure, homodimer. Mg(2+) serves as cofactor.

It localises to the cytoplasm. The catalysed reaction is tRNA(Lys) + L-lysine + ATP = L-lysyl-tRNA(Lys) + AMP + diphosphate. In Pelodictyon phaeoclathratiforme (strain DSM 5477 / BU-1), this protein is Lysine--tRNA ligase.